Consider the following 358-residue polypeptide: Guanidino acid hydrolase, mitochondrial (358 aa).

Residues 1–36 (MLRLLRSSWARGLGSGVATWRPSAGLFRPGCPGIRQ) constitute a mitochondrion transit peptide. A disordered region spans residues 31-56 (CPGIRQASGASDTPHHQSPSSESPVQ). The segment covering 46–56 (HQSPSSESPVQ) has biased composition (low complexity). Residues Gln-168 and His-193 each coordinate Mn(2+). Lys-199 is modified (N6-acetyllysine). N6-acetyllysine; alternate is present on Lys-223. Lys-223 is modified (N6-succinyllysine; alternate). Asp-284 serves as a coordination point for Mn(2+).

Belongs to the arginase family. Agmatinase subfamily. Mn(2+) serves as cofactor. In terms of tissue distribution, detected only in liver.

Its subcellular location is the mitochondrion. The enzyme catalyses 3-guanidinopropanoate + H2O = urea + beta-alanine. It carries out the reaction 4-guanidinobutanoate + H2O = urea + 4-aminobutanoate. It catalyses the reaction taurocyamine + H2O = urea + taurine. The catalysed reaction is L-arginine + H2O = urea + L-ornithine. The protein operates within nitrogen metabolism; urea cycle; L-ornithine and urea from L-arginine: step 1/1. Functionally, hydrolyzes linear guanidino acids to form urea and the corresponding amines. Displays specificity for substrates having a negatively charged head group and short chains including taurocyamine, guanidino propanoic and butanoic acids. May protect cells by detoxifying potentially harmful amounts of guanidino acids. Metabolizes L-arginine with low efficiency. This is Guanidino acid hydrolase, mitochondrial (Agmat) from Mus musculus (Mouse).